A 396-amino-acid polypeptide reads, in one-letter code: Agropine synthesis cyclase (396 aa).

Belongs to the peptidase M24B family.

The chain is Agropine synthesis cyclase (ags) from Rhizobium rhizogenes (Agrobacterium rhizogenes).